Here is a 505-residue protein sequence, read N- to C-terminus: MAQIDFRKKINWHRRYRSPQGVKTEHEILRIFESDRGRIINSPAIRRLQQKTQVFPLERNAAVRTRLTHSMEVQQVGRYIAKEILSRLKELKLLEAYGLDELTGPFESIVEMSCLMHDIGNPPFGHFGEAAINDWFRQRLHPEDAESQPLTDDRCSVAALRLRDGEEPLNELRRKIRQDLCHFEGNAQGIRLVHTLMRMNLTWAQVGGILKYTRPAWWRGETPETHHYLMKKPGYYLSEEAYIARLRKELNLALYSRFPLTWIMEAADDISYCVADLEDAVEKRIFTVEQLYHHLHEAWGQHEKGSLFSLVVENAWEKSRSNSLSRSTEDQFFMYLRVNTLNKLVPYAAQRFIDNLPAIFAGTFNHALLEDASECSDLLKLYKNVAVKHVFSHPDVERLELQGYRVISGLLEIYRPLLSLSLSDFTELVEKERVKRFPIESRLFHKLSTRHRLAYVEAVSKLPSDSPEFPLWEYYYRCRLLQDYISGMTDLYAWDEYRRLMAVEQ.

Residues 66–273 (RLTHSMEVQQ…MEAADDISYC (208 aa)) enclose the HD domain.

It belongs to the dGTPase family. Type 1 subfamily. In terms of assembly, homotetramer. Mg(2+) serves as cofactor.

It catalyses the reaction dGTP + H2O = 2'-deoxyguanosine + triphosphate + H(+). Functionally, dGTPase preferentially hydrolyzes dGTP over the other canonical NTPs. This chain is Deoxyguanosinetriphosphate triphosphohydrolase, found in Escherichia coli (strain K12 / MC4100 / BW2952).